We begin with the raw amino-acid sequence, 139 residues long: Large ribosomal subunit protein uL16c (139 aa).

Positions 1–17 (MLSPKKTKFRKQHRGRM) are enriched in basic residues. The tract at residues 1-23 (MLSPKKTKFRKQHRGRMKGSASK) is disordered.

This sequence belongs to the universal ribosomal protein uL16 family. As to quaternary structure, part of the 50S ribosomal subunit.

It localises to the plastid. Its subcellular location is the chloroplast. The sequence is that of Large ribosomal subunit protein uL16c from Porphyra purpurea (Red seaweed).